A 224-amino-acid polypeptide reads, in one-letter code: Protein YiiM (224 aa).

The MOSC domain maps to Ile26–Val163.

As to quaternary structure, monomer.

The sequence is that of Protein YiiM (yiiM) from Escherichia coli (strain K12).